We begin with the raw amino-acid sequence, 276 residues long: uncharacterized protein (276 aa).

This sequence to E.cuniculi ECU05_1600/ECU11_0130.

This is an uncharacterized protein from Encephalitozoon cuniculi (strain GB-M1) (Microsporidian parasite).